The sequence spans 906 residues: Pre-mRNA-splicing factor prp1 (906 aa).

Disordered regions lie at residues 50 to 129 (IEQR…VSSQ) and 142 to 164 (DEDW…KQPR). The segment covering 108–124 (REKQEQLQKEKYEKENP) has biased composition (basic and acidic residues). A Phosphoserine modification is found at S235. HAT repeat units lie at residues 258–290 (GDIR…LEEV), 322–353 (HPAA…KLEN), 354–384 (QAQH…NLEE), 385–416 (EVDN…LETY), 524–556 (KCID…LEKL), 558–590 (GTTE…ERKN), 592–624 (NDIA…IEFV), 693–725 (EQIE…LEEK), 726–758 (QSVI…MELR), 760–792 (GNIS…LEPR), and 824–856 (KKAD…YSLE).

In terms of assembly, interacts with brr2 and spp42.

Its subcellular location is the nucleus. In terms of biological role, involved in pre-mRNA splicing. Interacts with prp6 and prp13. May also be involved in the regulation of the G0-G1/G2 transition. Required for pre-spliceosome formation, which is the first step of pre-mRNA splicing. This protein is associated with snRNP U5. Has a role in branch site-3' splice site selection. Associates with the branch site-3' splice 3'-exon region. This Schizosaccharomyces pombe (strain 972 / ATCC 24843) (Fission yeast) protein is Pre-mRNA-splicing factor prp1 (prp1).